We begin with the raw amino-acid sequence, 37 residues long: Cytochrome b6-f complex subunit 5 (37 aa).

A helical membrane pass occupies residues 5-25 (LLSGIVLGLIVVTLSGLFYAA).

This sequence belongs to the PetG family. In terms of assembly, the 4 large subunits of the cytochrome b6-f complex are cytochrome b6, subunit IV (17 kDa polypeptide, PetD), cytochrome f and the Rieske protein, while the 4 small subunits are PetG, PetL, PetM and PetN. The complex functions as a dimer.

It is found in the cellular thylakoid membrane. In terms of biological role, component of the cytochrome b6-f complex, which mediates electron transfer between photosystem II (PSII) and photosystem I (PSI), cyclic electron flow around PSI, and state transitions. PetG is required for either the stability or assembly of the cytochrome b6-f complex. This is Cytochrome b6-f complex subunit 5 from Trichormus variabilis (strain ATCC 29413 / PCC 7937) (Anabaena variabilis).